The following is a 359-amino-acid chain: Peptide chain release factor 1 (359 aa).

Gln236 carries the N5-methylglutamine modification.

This sequence belongs to the prokaryotic/mitochondrial release factor family. Methylated by PrmC. Methylation increases the termination efficiency of RF1.

It is found in the cytoplasm. Functionally, peptide chain release factor 1 directs the termination of translation in response to the peptide chain termination codons UAG and UAA. The sequence is that of Peptide chain release factor 1 (prfA) from Mycoplasma pneumoniae (strain ATCC 29342 / M129 / Subtype 1) (Mycoplasmoides pneumoniae).